We begin with the raw amino-acid sequence, 302 residues long: 4-hydroxy-tetrahydrodipicolinate synthase (302 aa).

Thr46 contributes to the pyruvate binding site. Tyr134 functions as the Proton donor/acceptor in the catalytic mechanism. The active-site Schiff-base intermediate with substrate is Lys162. Ile204 serves as a coordination point for pyruvate.

This sequence belongs to the DapA family. As to quaternary structure, homotetramer; dimer of dimers.

The protein localises to the cytoplasm. It catalyses the reaction L-aspartate 4-semialdehyde + pyruvate = (2S,4S)-4-hydroxy-2,3,4,5-tetrahydrodipicolinate + H2O + H(+). It participates in amino-acid biosynthesis; L-lysine biosynthesis via DAP pathway; (S)-tetrahydrodipicolinate from L-aspartate: step 3/4. Its function is as follows. Catalyzes the condensation of (S)-aspartate-beta-semialdehyde [(S)-ASA] and pyruvate to 4-hydroxy-tetrahydrodipicolinate (HTPA). This is 4-hydroxy-tetrahydrodipicolinate synthase from Xanthomonas axonopodis pv. citri (strain 306).